A 172-amino-acid chain; its full sequence is Large ribosomal subunit protein uL10 (172 aa).

The protein belongs to the universal ribosomal protein uL10 family. In terms of assembly, part of the ribosomal stalk of the 50S ribosomal subunit. The N-terminus interacts with L11 and the large rRNA to form the base of the stalk. The C-terminus forms an elongated spine to which L12 dimers bind in a sequential fashion forming a multimeric L10(L12)X complex.

Functionally, forms part of the ribosomal stalk, playing a central role in the interaction of the ribosome with GTP-bound translation factors. This Chlamydia trachomatis serovar L2 (strain ATCC VR-902B / DSM 19102 / 434/Bu) protein is Large ribosomal subunit protein uL10.